A 373-amino-acid chain; its full sequence is Anhydro-N-acetylmuramic acid kinase (373 aa).

12 to 19 contacts ATP; sequence GTSLDGVD.

This sequence belongs to the anhydro-N-acetylmuramic acid kinase family.

The catalysed reaction is 1,6-anhydro-N-acetyl-beta-muramate + ATP + H2O = N-acetyl-D-muramate 6-phosphate + ADP + H(+). Its pathway is amino-sugar metabolism; 1,6-anhydro-N-acetylmuramate degradation. The protein operates within cell wall biogenesis; peptidoglycan recycling. In terms of biological role, catalyzes the specific phosphorylation of 1,6-anhydro-N-acetylmuramic acid (anhMurNAc) with the simultaneous cleavage of the 1,6-anhydro ring, generating MurNAc-6-P. Is required for the utilization of anhMurNAc either imported from the medium or derived from its own cell wall murein, and thus plays a role in cell wall recycling. The protein is Anhydro-N-acetylmuramic acid kinase of Salmonella gallinarum (strain 287/91 / NCTC 13346).